A 424-amino-acid chain; its full sequence is Appressorium protein ROW1 (424 aa).

The first 21 residues, 1 to 21 (MTKLTLTVALVSALLASGASA), serve as a signal peptide directing secretion. Disordered stretches follow at residues 19-54 (ASAQQPTGTGNGPDPRATTDLNRNQPTKSWTQWQPK), 69-90 (ANRIESGEGGQPGGEPQSGYNT), 278-304 (SGSTFRQGDPVTPPAHPAPSSSQCSSV), and 327-398 (SSSA…TQGA). Topologically, residues 22 to 403 (QQPTGTGNGP…NTQGAASSAS (382 aa)) are extracellular. The segment covering 37-54 (TDLNRNQPTKSWTQWQPK) has biased composition (polar residues). Composition is skewed to low complexity over residues 295–304 (APSSSQCSSV) and 327–347 (SSSAASSAATDSSASTNSASS). The segment covering 362–382 (SGTGSGSGSGSGSGSGSGSGS) has biased composition (gly residues). Residues 383 to 398 (SSGSSSSGSSSNTQGA) show a composition bias toward low complexity. Residues 404-424 (SLTISVGLAGLVAIGAAAFAL) traverse the membrane as a helical segment.

It localises to the cell membrane. The protein resides in the secreted. Plays a role in the formation of the appressorium, a specialized infection structure with the purpose of penetrating the host surface, and is required for proper remodeling of the appressorium wall and vesicle secretion. The chain is Appressorium protein ROW1 from Mycosarcoma maydis (Corn smut fungus).